Reading from the N-terminus, the 495-residue chain is MADRNLRDLLAPWVPDAPSRALREMTLDSRVAAAGDLFVAVVGHQADGRRYIPQAIAQGVAAIIAEAKDEATDGEIREMHGVPVIYLSQLNERLSALAGRFYHEPSDNLRLVGVTGTNGKTTTTQLLAQWSQLLGETSAVMGTVGNGLLGKVIPTENTTGSAVDVQHELAGLVDQGATFCAMEVSSHGLVQHRVAALKFPASVFTNLSRDHLDYHGDMEHYEAAKWLLYSEHHCGQAIINADDEVGRRWLAKLPDAVAVSMEDHINPNCHGRWLKATEVNYHDSGATIRFSSSWGDGEIESHLMGAFNVSNLLLALATLLALGYPLADLLKTAARLQPVCGRMEVFTAPGKPTVVVDYAHTPDALEKALQAARLHCAGKLWCVFGCGGDRDKGKRPLMGAIAEEFADVAVVTDDNPRTEEPRAIINDILAGMLDAGHAKVMEGRAEAVTCAVMQAKENDVVLVAGKGHEDYQIVGNQRLDYSDRVTVARLLGGIA.

UDP-N-acetyl-alpha-D-muramoyl-L-alanyl-D-glutamate is bound by residues leucine 27, serine 29, and 44 to 46 (HQA). 116–122 (GTNGKTT) serves as a coordination point for ATP. UDP-N-acetyl-alpha-D-muramoyl-L-alanyl-D-glutamate is bound by residues asparagine 157, 158–159 (TT), serine 185, glutamine 191, and arginine 193. Lysine 225 is subject to N6-carboxylysine. Meso-2,6-diaminopimelate is bound by residues arginine 390, 414-417 (DNPR), glycine 465, and glutamate 469. Residues 414-417 (DNPR) carry the Meso-diaminopimelate recognition motif motif.

The protein belongs to the MurCDEF family. MurE subfamily. It depends on Mg(2+) as a cofactor. Carboxylation is probably crucial for Mg(2+) binding and, consequently, for the gamma-phosphate positioning of ATP.

It localises to the cytoplasm. The enzyme catalyses UDP-N-acetyl-alpha-D-muramoyl-L-alanyl-D-glutamate + meso-2,6-diaminopimelate + ATP = UDP-N-acetyl-alpha-D-muramoyl-L-alanyl-gamma-D-glutamyl-meso-2,6-diaminopimelate + ADP + phosphate + H(+). It functions in the pathway cell wall biogenesis; peptidoglycan biosynthesis. Its function is as follows. Catalyzes the addition of meso-diaminopimelic acid to the nucleotide precursor UDP-N-acetylmuramoyl-L-alanyl-D-glutamate (UMAG) in the biosynthesis of bacterial cell-wall peptidoglycan. The protein is UDP-N-acetylmuramoyl-L-alanyl-D-glutamate--2,6-diaminopimelate ligase of Shigella flexneri.